A 174-amino-acid polypeptide reads, in one-letter code: Eukaryotic translation elongation factor 1 epsilon-1 (174 aa).

Alanine 2 is subject to N-acetylalanine. The tract at residues 2–56 (AAAAELSLLEKSLGLSKGNKYSAQGERQIPVLQTNNGPSLTGLTTIAAHLVKQAN) is N-terminal. Residues 50–173 (HLVKQANKEY…FIKNRLYTNS (124 aa)) form the GST C-terminal domain. The linker stretch occupies residues 57-63 (KEYLLGS). The interval 64 to 152 (TAEEKAIVQQ…SRWFCHIQHY (89 aa)) is C-terminal. Lysine 138 carries the N6-acetyllysine modification. A coiled-coil region spans residues 153–169 (PGIRQHLSSVVFIKNRL).

In terms of assembly, part of a multisubunit complex that groups tRNA ligases for Arg (RARS1), Asp (DARS1), Gln (QARS1), Ile (IARS1), Leu (LARS1), Lys (KARS1), Met (MARS1) the bifunctional ligase for Glu and Pro (EPRS1) and the auxiliary subunits AIMP1/p43, AIMP2/p38 and EEF1E1/p18. Can interact simultaneously with MARS1 and EPRS1. Forms a linear complex that contains MARS1, EEF1E1, EPRS1 and AIMP2 that is at the core of the multisubunit complex. Interacts with ATM and ATR. The interaction with ATM, which takes place independently of TP53, is induced by DNA damage that may occur during genotoxic stress or cell growth. The interaction with ATR is enhanced by UV irradiation. In terms of tissue distribution, down-regulated in various cancer tissues.

The protein localises to the cytoplasm. It is found in the cytosol. Its subcellular location is the nucleus. Functionally, positive modulator of ATM response to DNA damage. This is Eukaryotic translation elongation factor 1 epsilon-1 (EEF1E1) from Homo sapiens (Human).